The chain runs to 129 residues: Follitropin subunit beta (129 aa).

A signal peptide spans 1–18 (MKSVQFCFLFCCWRVICC). Disulfide bonds link cysteine 21–cysteine 69, cysteine 35–cysteine 84, cysteine 38–cysteine 122, cysteine 46–cysteine 100, cysteine 50–cysteine 102, and cysteine 105–cysteine 112. N-linked (GlcNAc...) asparagine glycans are attached at residues asparagine 25 and asparagine 42.

This sequence belongs to the glycoprotein hormones subunit beta family. In terms of assembly, heterodimer. The active follitropin is a heterodimer composed of an alpha chain/CGA shared with other hormones and a unique beta chain/FSHB shown here.

The protein localises to the secreted. Together with the alpha chain CGA constitutes follitropin, the follicle-stimulating hormone, and provides its biological specificity to the hormone heterodimer. Binds FSHR, a G protein-coupled receptor, on target cells to activate downstream signaling pathways. Follitropin is involved in follicle development and spermatogenesis in reproductive organs. In Panthera tigris altaica (Siberian tiger), this protein is Follitropin subunit beta (FSHB).